The following is a 481-amino-acid chain: ATP synthase subunit beta (481 aa).

160 to 167 (GGAGVGKT) is an ATP binding site.

This sequence belongs to the ATPase alpha/beta chains family. In terms of assembly, F-type ATPases have 2 components, CF(1) - the catalytic core - and CF(0) - the membrane proton channel. CF(1) has five subunits: alpha(3), beta(3), gamma(1), delta(1), epsilon(1). CF(0) has three main subunits: a(1), b(2) and c(9-12). The alpha and beta chains form an alternating ring which encloses part of the gamma chain. CF(1) is attached to CF(0) by a central stalk formed by the gamma and epsilon chains, while a peripheral stalk is formed by the delta and b chains.

The protein localises to the cell inner membrane. It catalyses the reaction ATP + H2O + 4 H(+)(in) = ADP + phosphate + 5 H(+)(out). Its function is as follows. Produces ATP from ADP in the presence of a proton gradient across the membrane. The catalytic sites are hosted primarily by the beta subunits. The protein is ATP synthase subunit beta of Stigmatella aurantiaca.